Here is a 304-residue protein sequence, read N- to C-terminus: Large ribosomal subunit protein uL18 (304 aa).

Belongs to the universal ribosomal protein uL18 family. In terms of assembly, component of a hexameric 5S RNP precursor complex, composed of 5S RNA, RRS1, RPF2, RPL5, RPL11 and SYO1; this complex acts as a precursor for ribosome assembly.

The protein localises to the cytoplasm. Functionally, component of the ribosome, a large ribonucleoprotein complex responsible for the synthesis of proteins in the cell. The small ribosomal subunit (SSU) binds messenger RNAs (mRNAs) and translates the encoded message by selecting cognate aminoacyl-transfer RNA (tRNA) molecules. The large subunit (LSU) contains the ribosomal catalytic site termed the peptidyl transferase center (PTC), which catalyzes the formation of peptide bonds, thereby polymerizing the amino acids delivered by tRNAs into a polypeptide chain. The nascent polypeptides leave the ribosome through a tunnel in the LSU and interact with protein factors that function in enzymatic processing, targeting, and the membrane insertion of nascent chains at the exit of the ribosomal tunnel. This chain is Large ribosomal subunit protein uL18, found in Chaetomium thermophilum (strain DSM 1495 / CBS 144.50 / IMI 039719) (Thermochaetoides thermophila).